Reading from the N-terminus, the 410-residue chain is FAS1 domain-containing protein CaO19.3004 (410 aa).

The N-terminal stretch at 1-18 is a signal peptide; the sequence is MKLSKLLQLAVFSSLVTS. Basic and acidic residues-rich tracts occupy residues 64 to 73 and 83 to 96; these read NAKFKRDPKN and GSAE…REPK. The tract at residues 64–98 is disordered; sequence NAKFKRDPKNVIDPASLKEGSAEEEQKDKREPKNL. In terms of domain architecture, FAS1 spans 247–407; it reads NNLLQSILPQ…GFVLIINDSL (161 aa).

It is found in the vacuole. The polypeptide is FAS1 domain-containing protein CaO19.3004 (Candida albicans (strain SC5314 / ATCC MYA-2876) (Yeast)).